Reading from the N-terminus, the 199-residue chain is Probable NADH dehydrogenase [ubiquinone] iron-sulfur protein 7, mitochondrial (199 aa).

Cysteine 74, cysteine 75, cysteine 139, and cysteine 169 together coordinate [4Fe-4S] cluster.

This sequence belongs to the complex I 20 kDa subunit family. In terms of assembly, complex I is composed of 45 different subunits This is a component of the iron-sulfur (IP) fragment of the enzyme. [4Fe-4S] cluster serves as cofactor.

Its subcellular location is the mitochondrion. It catalyses the reaction a ubiquinone + NADH + 5 H(+)(in) = a ubiquinol + NAD(+) + 4 H(+)(out). Core subunit of the mitochondrial membrane respiratory chain NADH dehydrogenase (Complex I) that is believed to belong to the minimal assembly required for catalysis. Complex I functions in the transfer of electrons from NADH to the respiratory chain. The immediate electron acceptor for the enzyme is believed to be ubiquinone. The sequence is that of Probable NADH dehydrogenase [ubiquinone] iron-sulfur protein 7, mitochondrial (nduf-7) from Caenorhabditis elegans.